A 41-amino-acid chain; its full sequence is Large ribosomal subunit protein bL36 (41 aa).

The tract at residues 1-21 (MKIRNSLKSLRGRHRDNQLVR) is disordered.

It belongs to the bacterial ribosomal protein bL36 family.

The chain is Large ribosomal subunit protein bL36 from Methylobacterium sp. (strain 4-46).